The chain runs to 477 residues: Glycogen synthase (477 aa).

Residue lysine 15 participates in ADP-alpha-D-glucose binding.

The protein belongs to the glycosyltransferase 1 family. Bacterial/plant glycogen synthase subfamily.

It catalyses the reaction [(1-&gt;4)-alpha-D-glucosyl](n) + ADP-alpha-D-glucose = [(1-&gt;4)-alpha-D-glucosyl](n+1) + ADP + H(+). Its pathway is glycan biosynthesis; glycogen biosynthesis. Synthesizes alpha-1,4-glucan chains using ADP-glucose. In Escherichia fergusonii (strain ATCC 35469 / DSM 13698 / CCUG 18766 / IAM 14443 / JCM 21226 / LMG 7866 / NBRC 102419 / NCTC 12128 / CDC 0568-73), this protein is Glycogen synthase.